Here is a 320-residue protein sequence, read N- to C-terminus: Malate dehydrogenase (320 aa).

NAD(+) is bound by residues 10-15 (GSGMIG) and aspartate 34. Substrate contacts are provided by arginine 83 and arginine 89. NAD(+) contacts are provided by residues asparagine 96 and 119-121 (ITN). Substrate is bound by residues asparagine 121 and arginine 152. The active-site Proton acceptor is histidine 176.

This sequence belongs to the LDH/MDH superfamily. MDH type 3 family.

The catalysed reaction is (S)-malate + NAD(+) = oxaloacetate + NADH + H(+). Catalyzes the reversible oxidation of malate to oxaloacetate. This Brucella melitensis biotype 2 (strain ATCC 23457) protein is Malate dehydrogenase.